We begin with the raw amino-acid sequence, 364 residues long: Lysophosphatidic acid receptor 1 (364 aa).

The Extracellular portion of the chain corresponds to 1 to 50; the sequence is MAAAFTSSPVVSQPQFTAMNEQQCFSNESIAFFYNRSGKYLATEWNTVTK. Cystine bridges form between cysteine 24-cysteine 190 and cysteine 188-cysteine 195. N-linked (GlcNAc...) asparagine glycans are attached at residues asparagine 27 and asparagine 35. An a 1-acyl-sn-glycero-3-phosphate-binding site is contributed by lysine 39. The helical transmembrane segment at 51–75 threads the bilayer; it reads LVMGLGITVCIFIMLANLLVMVAIY. Topologically, residues 76 to 83 are cytoplasmic; the sequence is VNRRFHFP. Residues 84 to 107 traverse the membrane as a helical segment; that stretch reads IYYLMANLAAADFFAGLAYFYLMF. The Extracellular portion of the chain corresponds to 108 to 121; that stretch reads NTGPNTRRLTVSTW. A helical transmembrane segment spans residues 122-144; that stretch reads LLRQGLIDTSLTVSVANLLAIAI. Position 124-129 (124-129) interacts with a 1-acyl-sn-glycero-3-phosphate; it reads RQGLID. At 145 to 163 the chain is on the cytoplasmic side; that stretch reads ERHITVFRMQLHARMSNRR. A helical membrane pass occupies residues 164–184; the sequence is VVVVIVVIWTMAIVMGAIPSV. The Extracellular portion of the chain corresponds to 185–204; it reads GWNCICDIENCSNMAPLYSD. The chain crosses the membrane as a helical span at residues 205–225; it reads SYLVFWAIFNLVTFVVMVVLY. Tryptophan 210 is a binding site for a 1-acyl-sn-glycero-3-phosphate. At 226 to 255 the chain is on the cytoplasmic side; the sequence is AHIFGYVRQRTMRMSRHSSGPRRNRDTMMS. The helical transmembrane segment at 256–280 threads the bilayer; the sequence is LLKTVVIVLGAFIICWTPGLVLLLL. The Extracellular segment spans residues 281 to 294; the sequence is DVCCPQCDVLAYEK. Cysteine 284 and cysteine 287 are disulfide-bonded. A helical transmembrane segment spans residues 295 to 315; the sequence is FFLLLAEFNSAMNPIIYSYRD. Residues 316–364 lie on the Cytoplasmic side of the membrane; the sequence is KEMSATFRQILCCQRSENTSGPTEGSDRSASSLNHTILAGVHSNDHSVV. Phosphoserine is present on serine 341. The residue at position 351 (threonine 351) is a Phosphothreonine.

It belongs to the G-protein coupled receptor 1 family. As to quaternary structure, interacts with RALA and GRK2. Interacts with GNAQ and GNA13. Interacts with CD14; the interaction is enhanced by exposure to bacterial lipopolysaccharide (LPS). Post-translationally, N-glycosylated.

Its subcellular location is the cell surface. The protein localises to the cell membrane. It is found in the endosome. Functionally, receptor for lysophosphatidic acid (LPA). Plays a role in the reorganization of the actin cytoskeleton, cell migration, differentiation and proliferation, and thereby contributes to the responses to tissue damage and infectious agents. Activates downstream signaling cascades via the G(i)/G(o), G(12)/G(13), and G(q) families of heteromeric G proteins. Signaling inhibits adenylyl cyclase activity and decreases cellular cAMP levels. Signaling triggers an increase of cytoplasmic Ca(2+) levels. Activates RALA; this leads to the activation of phospholipase C (PLC) and the formation of inositol 1,4,5-trisphosphate. Signaling mediates activation of down-stream MAP kinases. Contributes to the regulation of cell shape. Promotes Rho-dependent reorganization of the actin cytoskeleton in neuronal cells and neurite retraction. Promotes the activation of Rho and the formation of actin stress fibers. Promotes formation of lamellipodia at the leading edge of migrating cells via activation of RAC1. Through its function as LPA receptor, plays a role in chemotaxis and cell migration, including responses to injury and wounding. Plays a role in triggering inflammation in response to bacterial lipopolysaccharide (LPS) via its interaction with CD14. Promotes cell proliferation in response to LPA. Inhibits the intracellular ciliogenesis pathway in response to LPA and through AKT1 activation. Required for normal skeleton development. May play a role in osteoblast differentiation. Required for normal brain development. Required for normal proliferation, survival and maturation of newly formed neurons in the adult dentate gyrus. Plays a role in pain perception and in the initiation of neuropathic pain. In Bos taurus (Bovine), this protein is Lysophosphatidic acid receptor 1 (LPAR1).